The sequence spans 207 residues: Ribosomal RNA small subunit methyltransferase G (207 aa).

Residues Gly-74, Leu-79, 125-126 (VE), and Arg-140 contribute to the S-adenosyl-L-methionine site.

It belongs to the methyltransferase superfamily. RNA methyltransferase RsmG family.

It localises to the cytoplasm. It carries out the reaction guanosine(527) in 16S rRNA + S-adenosyl-L-methionine = N(7)-methylguanosine(527) in 16S rRNA + S-adenosyl-L-homocysteine. Its function is as follows. Specifically methylates the N7 position of guanine in position 527 of 16S rRNA. This is Ribosomal RNA small subunit methyltransferase G from Shewanella loihica (strain ATCC BAA-1088 / PV-4).